The sequence spans 235 residues: 15,16-dihydrobiliverdin:ferredoxin oxidoreductase (235 aa).

Belongs to the HY2 family.

It catalyses the reaction 15,16-dihydrobiliverdin + oxidized 2[4Fe-4S]-[ferredoxin] = biliverdin IXalpha + reduced 2[4Fe-4S]-[ferredoxin] + 2 H(+). In terms of biological role, catalyzes the two-electron reduction of biliverdin IX-alpha at the C15 methine bridge. In Parasynechococcus marenigrum (strain WH8102), this protein is 15,16-dihydrobiliverdin:ferredoxin oxidoreductase (pebA).